A 488-amino-acid chain; its full sequence is UDP-N-acetylmuramate--L-alanine ligase (488 aa).

127-133 (GTHGKTT) is a binding site for ATP.

This sequence belongs to the MurCDEF family.

It is found in the cytoplasm. It carries out the reaction UDP-N-acetyl-alpha-D-muramate + L-alanine + ATP = UDP-N-acetyl-alpha-D-muramoyl-L-alanine + ADP + phosphate + H(+). It functions in the pathway cell wall biogenesis; peptidoglycan biosynthesis. Cell wall formation. This is UDP-N-acetylmuramate--L-alanine ligase from Shewanella oneidensis (strain ATCC 700550 / JCM 31522 / CIP 106686 / LMG 19005 / NCIMB 14063 / MR-1).